The following is a 500-amino-acid chain: Metacaspase-5 (500 aa).

An N-terminal signal peptide occupies residues 1 to 18; that stretch reads MDAALALLFGQVATAVLP. An important for catalytic activity region spans residues 19 to 63; it reads YVVNSIGRVPRPKRVDVKKAMGEAHQCRPVVPYRAPRPYTEGRVK. 2 N-linked (GlcNAc...) asparagine glycosylation sites follow: asparagine 70 and asparagine 113. Residue histidine 147 is part of the active site. The Ca(2+) site is built by aspartate 162, aspartate 178, and aspartate 179. Cysteine 202 is an active-site residue. Aspartate 209 is a binding site for Ca(2+). N-linked (GlcNAc...) asparagine glycosylation is found at asparagine 219, asparagine 235, asparagine 258, asparagine 264, asparagine 283, and asparagine 332. Disordered stretches follow at residues 358-419 and 444-500; these read EATL…QAYY and QPPQ…PGRK. Positions 379 to 389 are enriched in polar residues; that stretch reads ASTSNGKSNPG. Over residues 444–461 the composition is skewed to low complexity; the sequence is QPPQQAYYQPPQQAYYQP.

The protein belongs to the peptidase C14B family.

The protein localises to the recycling endosome. In terms of biological role, cysteine protease that cleaves specifically after arginine or lysine residues. This Trypanosoma brucei brucei protein is Metacaspase-5.